The following is an 85-amino-acid chain: Large ribosomal subunit protein eL34 (85 aa).

It belongs to the eukaryotic ribosomal protein eL34 family.

The polypeptide is Large ribosomal subunit protein eL34 (Saccharolobus islandicus (strain M.16.27) (Sulfolobus islandicus)).